A 208-amino-acid chain; its full sequence is Adenylyl-sulfate kinase (208 aa).

35–42 (GLSGSGKS) contributes to the ATP binding site. The Phosphoserine intermediate role is filled by S109.

It belongs to the APS kinase family.

It carries out the reaction adenosine 5'-phosphosulfate + ATP = 3'-phosphoadenylyl sulfate + ADP + H(+). It functions in the pathway sulfur metabolism; hydrogen sulfide biosynthesis; sulfite from sulfate: step 2/3. Functionally, catalyzes the synthesis of activated sulfate. The chain is Adenylyl-sulfate kinase from Geotalea uraniireducens (strain Rf4) (Geobacter uraniireducens).